The sequence spans 59 residues: MAVPKRKTSPSRRNMRRSHHALTAEAFQECPNCGELKRPHNLCNACGHYNGREIVSVEA.

The protein belongs to the bacterial ribosomal protein bL32 family.

In Rhizorhabdus wittichii (strain DSM 6014 / CCUG 31198 / JCM 15750 / NBRC 105917 / EY 4224 / RW1) (Sphingomonas wittichii), this protein is Large ribosomal subunit protein bL32.